Reading from the N-terminus, the 1902-residue chain is MQRKKKGLSILLAGTVALGALAVLPVGEIQAKAAISQQTKVSSLANTVKAATAKQAATDTTAATTNQAIATQLAAKGIDYNKLNKVQQQDTYVDVIVQMSAAPASENGTLRTDYSSTAEIQQETNKVIAAQASVKAAVEQVTQQTAGESYGYVVNGFSTKVRVVDIPKLKQIAGVKTVTLAKVYYPTDAKANSMANVQAVWSNYKYKGEGTVVSVIDTGIDPTHKDMRLSDDKDVKLTKYDVEKFTDTAKHGRYFTSKVPYGFNYADNNDTITDDTVDEQHGMHVAGIIGANGTGDDPTKSVVGVAPEAQLLAMKVFTNSDTSATTGSATLVSAIEDSAKIGADVLNMSLGSDSGNQTLEDPEIAAVQNANESGTAAVISAGNSGTSGSATQGVNKDYYGLQDNEMVGTPGTSRGATTVASAENTDVISQAVTITDGKDLQLGPETIQLSSNDFTGSFDQKKFYVVKDASGDLSKGAAADYTADAKGKIAIVKRGELNFADKQKYAQAAGAAGLIIVNNDGTATPLTSIRLTTTFPTFGLSSKTGQKLVDWVTAHPDDSLGVKIALTLLPNQKYTEDKMSDFTSYGPVSNLSFKPDITAPGGNIWSTQNNNGYTNMSGTSMASPFIAGSQALLKQALNNKNNPFYADYKQLKGTALTDFLKTVEMNTAQPINDINYNNVIVSPRRQGAGLVDVKAAIDALEKNPSTVVAENGYPAVELKDFTSTDKTFKLTFTNRTTHELTYQMDSNTDTNAVYTSATDPNSGVLYDKKIDGAAIKAGSDITVPAGKTAQIEFTLSLPKSFDQQQFVEGFLNFKGSDGSRLNLPYMGFFGDWNDGKIVDSLNGITYSPAGGNYGTVPLLTNKNTGHQYYGGMVTDADGKQTVDDQAIAFSSDKNALYNDISMQYYLLRNISNVQVDILDGQGNKVTTLSSSTNQTKTYYDAHSQKYIYYNAPAWDGTYYDQRDGNIKTADDGSYTYRISGVPEGGDKRQVFDVPFKLDSKAPTVRHVALSAKTENGKTQYYLTAEAKDDLSGLDATKSVKTAINEVTNLDATFTDAGTTADGYTKIETPLSDEQAQALGNGDNSAELYLTDNASNATNQDASVQKPGSTSFDLIVNGGGIPDKISSTTTGYEANTQGGGTYTFSGTYPAAVDGTYTDAQGKKHDLNTTYDAATNSFTASMAVTNADYAAQVDLYADKAHTQLLKHFDTKVRLTAPTFTDLKFNNGSDQTSEATIKVTGTVSSDTKTVNVGDTVAALDAQHHFSVDVPVNYGDNTIKVTATDEDGNTTTEQKTITSSYDPDVLKNAVTFDQGVKFGANEFNATSAKFYDPKTGIATITGKVKHPTTTLQVDGKQISIKNDLTFSFTLDLGTLGQKPFGVVVGDTTQNKTFQEALTFILDAVAPTLSLDSSTDAPVYTNDPNFQITGTATDNAQYLSLAINGSHVASQYADININSGKPGHMAIDQPVKLLEGKNVLTVAVTDSENNTTTKKITVYYEPKKTLAAPTVTPSTTEPAKTVTLTANAAATGETVQYSADGGKTYQDVPAAGVTVTANGTFKFKSTDLYGNESPAVDYVVTNIKADDPAQLQTAKQALTNLIASAKTLSASGKYDDATTTALAAATQKAQTALDQTDASVDSLTGANRDLQTAINQLAAKLPADKKTSLLNQLQSVKAALGTDLGNQTDPSTGKTFTAALDDLVAQAQAGTQTADQLQASLAKVLDAVLAKLAEGIKAATPAEVGNAKDAATGKTWYADIADTLTSGQASADASDKLAHLQALQSLKTKVAAAVEAAKTAGKGDDTTGTSDKGGGQGTPAPAPGDTGKDKGDEGSQPSSGGNIPTKPATTTSTSTDDTTDRNGQHTSGKGALPKTAETTERPAFGFLGVIVVSLMGVLGLKRKQREE.

An N-terminal signal peptide occupies residues 1–33; sequence MQRKKKGLSILLAGTVALGALAVLPVGEIQAKA. Residues 34–187 constitute a propeptide that is removed on maturation; it reads AISQQTKVSS…VTLAKVYYPT (154 aa). The Peptidase S8 domain occupies 191–697; the sequence is ANSMANVQAV…AGLVDVKAAI (507 aa). Catalysis depends on charge relay system residues Asp217, His281, and Ser620. Low complexity predominate over residues 1793–1805; sequence KTAGKGDDTTGTS. The disordered stretch occupies residues 1793–1872; the sequence is KTAGKGDDTT…GKGALPKTAE (80 aa). Positions 1867–1871 match the LPXTG sorting signal motif; the sequence is LPKTA. Residue Thr1870 is modified to Pentaglycyl murein peptidoglycan amidated threonine. Residues 1871–1902 constitute a propeptide, removed by sortase; it reads AETTERPAFGFLGVIVVSLMGVLGLKRKQREE.

It belongs to the peptidase S8 family.

Its subcellular location is the secreted. It localises to the cell wall. The enzyme catalyses Endopeptidase activity with very broad specificity, although some subsite preference have been noted, e.g. large hydrophobic residues in the P1 and P4 positions, and Pro in the P2 position. Best known for its action on caseins, although it has been shown to hydrolyze hemoglobin and oxidized insulin B-chain.. Protease which breaks down milk proteins during the growth of the bacteria on milk. This is PII-type proteinase (prtP) from Lacticaseibacillus paracasei (Lactobacillus paracasei).